The primary structure comprises 692 residues: Elongation factor G (692 aa).

The tr-type G domain occupies 8–282 (EKTRNIGIMA…GVVDYLPSPV (275 aa)). GTP is bound by residues 17–24 (AHIDAGKT), 81–85 (DTPGH), and 135–138 (NKMD).

The protein belongs to the TRAFAC class translation factor GTPase superfamily. Classic translation factor GTPase family. EF-G/EF-2 subfamily.

Its subcellular location is the cytoplasm. Catalyzes the GTP-dependent ribosomal translocation step during translation elongation. During this step, the ribosome changes from the pre-translocational (PRE) to the post-translocational (POST) state as the newly formed A-site-bound peptidyl-tRNA and P-site-bound deacylated tRNA move to the P and E sites, respectively. Catalyzes the coordinated movement of the two tRNA molecules, the mRNA and conformational changes in the ribosome. The polypeptide is Elongation factor G (Geobacillus kaustophilus (strain HTA426)).